The sequence spans 334 residues: D-aspartate oxidase 2 (334 aa).

5 residues coordinate FAD: Asp38, Lys39, Ser46, Gly310, and Thr315.

The protein belongs to the DAMOX/DASOX family. FAD serves as cofactor. Expressed in the intestinal cells, pharyngeal muscles, and body wall muscles in adult hermaphrodites.

Its subcellular location is the cytoplasm. It carries out the reaction D-aspartate + O2 + H2O = oxaloacetate + H2O2 + NH4(+). The catalysed reaction is D-glutamate + O2 + H2O = H2O2 + 2-oxoglutarate + NH4(+). Its activity is regulated as follows. Inhibited by thiolactomycin. Its function is as follows. Selectively catalyzes the oxidative deamination of acidic amino acids. May play a role in the egg-laying events and early development of the worm, in addition to quality control of the germ cells. This Caenorhabditis elegans protein is D-aspartate oxidase 2 (ddo-2).